A 190-amino-acid polypeptide reads, in one-letter code: Probable RNA-binding protein 18 (190 aa).

Residues 25–106 form the RRM domain; it reads HRLWIGNLDP…KKLVVRWAHA (82 aa). The tract at residues 166–190 is disordered; the sequence is VYSYFKPPDKKRTTPYSRTAWKSRR.

This chain is Probable RNA-binding protein 18 (RBM18), found in Pongo abelii (Sumatran orangutan).